The chain runs to 510 residues: 2,3-bisphosphoglycerate-independent phosphoglycerate mutase (510 aa).

Residues Asp12 and Ser62 each contribute to the Mn(2+) site. Catalysis depends on Ser62, which acts as the Phosphoserine intermediate. Substrate is bound by residues His123, 152–153 (RD), Arg184, Arg190, 257–260 (RADR), and Lys331. Mn(2+)-binding residues include Asp399, His403, Asp440, His441, and His458.

Belongs to the BPG-independent phosphoglycerate mutase family. As to quaternary structure, monomer. Requires Mn(2+) as cofactor.

The enzyme catalyses (2R)-2-phosphoglycerate = (2R)-3-phosphoglycerate. It participates in carbohydrate degradation; glycolysis; pyruvate from D-glyceraldehyde 3-phosphate: step 3/5. Its function is as follows. Catalyzes the interconversion of 2-phosphoglycerate and 3-phosphoglycerate. This chain is 2,3-bisphosphoglycerate-independent phosphoglycerate mutase, found in Lawsonia intracellularis (strain PHE/MN1-00).